A 358-amino-acid polypeptide reads, in one-letter code: DNA methyltransferase CcrM (358 aa).

Residues 1-260 form a methyltransferase region; the sequence is MKFGPETIIH…AKVVPIAPED (260 aa). 2 DNA-binding regions (target strand DNA) span residues 31–34 and 39–45; these read DPPY and GGDLLRP. DNA-binding regions (non-target strand DNA) lie at residues 93 to 94 and 109 to 110; these read YH and WI. His94 contributes to the dsDNA binding site. Positions 122–132 form a DNA-binding region, target strand DNA; that stretch reads MPNFKGTRFAN. Positions 153 to 157 form a DNA-binding region, non-target strand DNA; that stretch reads YDALK. The dsDNA site is built by Gln164 and Arg179. Residues 187–193 constitute a DNA-binding region (target strand DNA); that stretch reads KAHPTQK. The RAMA domain occupies 259–355; it reads EDLDVMGSKR…IDVLRAQVRA (97 aa). Residues 261 to 270 are linker; that stretch reads LDVMGSKRAE. DsDNA contacts are provided by Lys267 and Arg272. The tract at residues 272 to 358 is non-specific DNA-binding; sequence RVPFGTIVEA…LRAQVRAGMN (87 aa). 2 consecutive DNA-binding regions (non-target strand DNA) follow at residues 315-317 and 330-332; these read SIH and NGW. Arg350 is a dsDNA binding site.

Belongs to the N(4)/N(6)-methyltransferase family. As to quaternary structure, homodimer. In terms of processing, rapidly degraded by Lon protease prior to cell division.

The catalysed reaction is a 2'-deoxyadenosine in DNA + S-adenosyl-L-methionine = an N(6)-methyl-2'-deoxyadenosine in DNA + S-adenosyl-L-homocysteine + H(+). In terms of biological role, a beta subtype methylase that recognizes the double-stranded sequence 5'-GANTC-3' and methylates non-modifed A-2 on the hemimethylated, post-replicative DNA. Opens a bubble in the DNA at the recognition site, allowing precise recognition of the sequence and ensuring enzyme specificity. Functions only in the predivisional cell. Responsible for 5'-GANTC-3' methylation in the cell; methylation of hemimethylated sites generated after replication fork passage occurs late in the predivisional cell, near completion of chromosome replication but prior to cell division. Contributes to the accurate cell-cycle control of DNA replication and cellular morphology. The sequence is that of DNA methyltransferase CcrM (ccrMIM) from Caulobacter vibrioides (strain ATCC 19089 / CIP 103742 / CB 15) (Caulobacter crescentus).